Consider the following 263-residue polypeptide: Glucosamine-6-phosphate deaminase 2 (263 aa).

Asp-82 serves as the catalytic Proton acceptor; for enolization step. The For ring-opening step role is filled by Asn-151. His-153 functions as the Proton acceptor; for ring-opening step in the catalytic mechanism. The active-site For ring-opening step is the Glu-158.

This sequence belongs to the glucosamine/galactosamine-6-phosphate isomerase family. As to quaternary structure, homohexamer.

The catalysed reaction is alpha-D-glucosamine 6-phosphate + H2O = beta-D-fructose 6-phosphate + NH4(+). Its function is as follows. Catalyzes the reversible conversion of alpha-D-glucosamine 6-phosphate (GlcN-6P) into beta-D-fructose 6-phosphate (Fru-6P) and ammonium ion, a regulatory reaction step in de novo uridine diphosphate-N-acetyl-alpha-D-glucosamine (UDP-GlcNAc) biosynthesis via hexosamine pathway. The sequence is that of Glucosamine-6-phosphate deaminase 2 (GPI2) from Giardia intestinalis (Giardia lamblia).